A 594-amino-acid chain; its full sequence is NADH-quinone oxidoreductase subunit C/D (594 aa).

The segment at 1–185 (MTTGSALYIP…DPFSLNLAKQ (185 aa)) is NADH dehydrogenase I subunit C. The NADH dehydrogenase I subunit D stretch occupies residues 209 to 594 (DYMFLNLGPN…IDFVMADVDR (386 aa)).

In the N-terminal section; belongs to the complex I 30 kDa subunit family. It in the C-terminal section; belongs to the complex I 49 kDa subunit family. NDH-1 is composed of 13 different subunits. Subunits NuoB, CD, E, F, and G constitute the peripheral sector of the complex.

It localises to the cell inner membrane. It catalyses the reaction a quinone + NADH + 5 H(+)(in) = a quinol + NAD(+) + 4 H(+)(out). In terms of biological role, NDH-1 shuttles electrons from NADH, via FMN and iron-sulfur (Fe-S) centers, to quinones in the respiratory chain. The immediate electron acceptor for the enzyme in this species is believed to be ubiquinone. Couples the redox reaction to proton translocation (for every two electrons transferred, four hydrogen ions are translocated across the cytoplasmic membrane), and thus conserves the redox energy in a proton gradient. This Pseudomonas fluorescens (strain SBW25) protein is NADH-quinone oxidoreductase subunit C/D.